The chain runs to 180 residues: 3-hydroxyanthranilate 3,4-dioxygenase (180 aa).

Residue arginine 46 participates in O2 binding. Fe cation contacts are provided by histidine 50, glutamate 56, and histidine 94. Glutamate 56 lines the substrate pocket. Positions 98 and 109 each coordinate substrate. Fe cation-binding residues include cysteine 124, cysteine 127, cysteine 161, and cysteine 164.

The protein belongs to the 3-HAO family. As to quaternary structure, homodimer. The cofactor is Fe(2+).

The enzyme catalyses 3-hydroxyanthranilate + O2 = (2Z,4Z)-2-amino-3-carboxymuconate 6-semialdehyde. It participates in cofactor biosynthesis; NAD(+) biosynthesis; quinolinate from L-kynurenine: step 3/3. Its function is as follows. Catalyzes the oxidative ring opening of 3-hydroxyanthranilate to 2-amino-3-carboxymuconate semialdehyde, which spontaneously cyclizes to quinolinate. This chain is 3-hydroxyanthranilate 3,4-dioxygenase, found in Ruegeria pomeroyi (strain ATCC 700808 / DSM 15171 / DSS-3) (Silicibacter pomeroyi).